Here is a 202-residue protein sequence, read N- to C-terminus: ATP-dependent Clp protease proteolytic subunit (202 aa).

The active-site Nucleophile is the Ser106. His131 is an active-site residue.

Belongs to the peptidase S14 family. Fourteen ClpP subunits assemble into 2 heptameric rings which stack back to back to give a disk-like structure with a central cavity, resembling the structure of eukaryotic proteasomes.

The protein localises to the cytoplasm. The catalysed reaction is Hydrolysis of proteins to small peptides in the presence of ATP and magnesium. alpha-casein is the usual test substrate. In the absence of ATP, only oligopeptides shorter than five residues are hydrolyzed (such as succinyl-Leu-Tyr-|-NHMec, and Leu-Tyr-Leu-|-Tyr-Trp, in which cleavage of the -Tyr-|-Leu- and -Tyr-|-Trp bonds also occurs).. Cleaves peptides in various proteins in a process that requires ATP hydrolysis. Has a chymotrypsin-like activity. Plays a major role in the degradation of misfolded proteins. In Acidovorax sp. (strain JS42), this protein is ATP-dependent Clp protease proteolytic subunit.